The sequence spans 308 residues: Glycine--tRNA ligase alpha subunit (308 aa).

This sequence belongs to the class-II aminoacyl-tRNA synthetase family. As to quaternary structure, tetramer of two alpha and two beta subunits.

Its subcellular location is the cytoplasm. The catalysed reaction is tRNA(Gly) + glycine + ATP = glycyl-tRNA(Gly) + AMP + diphosphate. The chain is Glycine--tRNA ligase alpha subunit from Brevibacillus brevis (strain 47 / JCM 6285 / NBRC 100599).